The sequence spans 208 residues: Coiled-coil domain-containing protein 25 (208 aa).

Residues 1–105 (MVFYFTSSSV…SNLKKTADMD (105 aa)) lie on the Extracellular side of the membrane. The tract at residues 21 to 25 (KDKYE) is DNA-binding. At K23 the chain carries N6-acetyllysine. A helical membrane pass occupies residues 106–122 (VGQIGFHRQKDVKIVTV). Residues 117–187 (VKIVTVEKKV…REMDELRSYS (71 aa)) adopt a coiled-coil conformation. Residues 123 to 208 (EKKVNEILNR…QDGNDSDEFM (86 aa)) are Cytoplasmic-facing. The segment covering 145–184 (EAEKECRDHEERNEKKAQIQEMKRREKEEMKKKREMDELR) has biased composition (basic and acidic residues). Positions 145 to 208 (EAEKECRDHE…QDGNDSDEFM (64 aa)) are disordered. At S204 the chain carries Phosphoserine.

This sequence belongs to the CCDC25 family. Interacts (via cytoplasmic region) with ILK.

It localises to the cell membrane. The protein localises to the endomembrane system. Functionally, transmembrane receptor that senses neutrophil extracellular traps (NETs) and triggers the ILK-PARVB pathway to enhance cell motility. NETs are mainly composed of DNA fibers and are released by neutrophils to bind pathogens during inflammation. Formation of NETs is also associated with cancer metastasis, NET-DNA acting as a chemotactic factor to attract cancer cells. Specifically binds NETs on its extracellular region, in particular the 8-OHdG-enriched DNA present in NETs, and recruits ILK, initiating the ILK-PARVB cascade to induce cytoskeleton rearrangement and directional migration of cells. In Bos taurus (Bovine), this protein is Coiled-coil domain-containing protein 25.